Consider the following 310-residue polypeptide: Aspartate carbamoyltransferase catalytic subunit (310 aa).

Carbamoyl phosphate is bound by residues Arg57 and Thr58. Lys86 serves as a coordination point for L-aspartate. Arg107, His135, and Gln138 together coordinate carbamoyl phosphate. The L-aspartate site is built by Arg168 and Arg229. 2 residues coordinate carbamoyl phosphate: Leu268 and Pro269.

It belongs to the aspartate/ornithine carbamoyltransferase superfamily. ATCase family. Heterooligomer of catalytic and regulatory chains.

The catalysed reaction is carbamoyl phosphate + L-aspartate = N-carbamoyl-L-aspartate + phosphate + H(+). The protein operates within pyrimidine metabolism; UMP biosynthesis via de novo pathway; (S)-dihydroorotate from bicarbonate: step 2/3. Functionally, catalyzes the condensation of carbamoyl phosphate and aspartate to form carbamoyl aspartate and inorganic phosphate, the committed step in the de novo pyrimidine nucleotide biosynthesis pathway. In Thermococcus onnurineus (strain NA1), this protein is Aspartate carbamoyltransferase catalytic subunit.